A 178-amino-acid chain; its full sequence is Large ribosomal subunit protein eL20w (178 aa).

This sequence belongs to the eukaryotic ribosomal protein eL20 family.

This Arabidopsis thaliana (Mouse-ear cress) protein is Large ribosomal subunit protein eL20w (RPL18AD).